A 272-amino-acid polypeptide reads, in one-letter code: Small ribosomal subunit protein uS2 (272 aa).

The segment at 244–272 (EDDYEGAEGDLDLDSANEEESLEDNNEEE) is disordered.

This sequence belongs to the universal ribosomal protein uS2 family.

In Trichodesmium erythraeum (strain IMS101), this protein is Small ribosomal subunit protein uS2.